A 408-amino-acid chain; its full sequence is Photox toxin (408 aa).

The disordered stretch occupies residues Asn-168–Lys-196. Positions Asn-184–Met-193 are enriched in pro residues. A TR mART core domain is found at Pro-190 to Asp-393. Catalysis depends on residues Arg-288, Ser-318, and Glu-355.

The protein in the C-terminal section; belongs to the SpvB family.

It catalyses the reaction L-arginyl-[protein] + NAD(+) = N(omega)-(ADP-D-ribosyl)-L-arginyl-[protein] + nicotinamide + H(+). Functionally, mono-ADP-ribosylates chicken skeletal alpha-actin and human non-skeletal beta- and gamma-actin. Mono-ADP-ribosylates 'Arg-177' of yeast actin, blocking its ability to polymerize. Does not possess NAD(+)-glycohydrolase activity, unlike most mART enzymes. Upon expression in S.cerevisiae almost completely inhibits growth. The chain is Photox toxin (phxA) from Photorhabdus laumondii subsp. laumondii (strain DSM 15139 / CIP 105565 / TT01) (Photorhabdus luminescens subsp. laumondii).